A 304-amino-acid polypeptide reads, in one-letter code: Mycothiol acetyltransferase (304 aa).

N-acetyltransferase domains follow at residues 16 to 155 (AHVE…RTGL) and 164 to 304 (VALS…YRRA). Glu-46 contacts 1D-myo-inositol 2-(L-cysteinylamino)-2-deoxy-alpha-D-glucopyranoside. Position 87–89 (87–89 (LVV)) interacts with acetyl-CoA. Residues Glu-190, Lys-230, and Glu-237 each contribute to the 1D-myo-inositol 2-(L-cysteinylamino)-2-deoxy-alpha-D-glucopyranoside site. Acetyl-CoA-binding positions include 241–243 (LGV) and 248–254 (AARGLGS). Tyr-275 contacts 1D-myo-inositol 2-(L-cysteinylamino)-2-deoxy-alpha-D-glucopyranoside.

The protein belongs to the acetyltransferase family. MshD subfamily. In terms of assembly, monomer.

The enzyme catalyses 1D-myo-inositol 2-(L-cysteinylamino)-2-deoxy-alpha-D-glucopyranoside + acetyl-CoA = mycothiol + CoA + H(+). In terms of biological role, catalyzes the transfer of acetyl from acetyl-CoA to desacetylmycothiol (Cys-GlcN-Ins) to form mycothiol. This Clavibacter sepedonicus (Clavibacter michiganensis subsp. sepedonicus) protein is Mycothiol acetyltransferase.